The following is a 439-amino-acid chain: Proline--tRNA ligase (439 aa).

Belongs to the class-II aminoacyl-tRNA synthetase family. ProS type 2 subfamily. In terms of assembly, homodimer.

The protein localises to the cytoplasm. It catalyses the reaction tRNA(Pro) + L-proline + ATP = L-prolyl-tRNA(Pro) + AMP + diphosphate. In terms of biological role, catalyzes the attachment of proline to tRNA(Pro) in a two-step reaction: proline is first activated by ATP to form Pro-AMP and then transferred to the acceptor end of tRNA(Pro). This chain is Proline--tRNA ligase, found in Rhodopseudomonas palustris (strain BisA53).